Here is a 184-residue protein sequence, read N- to C-terminus: Peptidyl-tRNA hydrolase (184 aa).

Tyr14 contributes to the tRNA binding site. His19 acts as the Proton acceptor in catalysis. TRNA contacts are provided by Phe64, Asn66, and Asn112.

It belongs to the PTH family. In terms of assembly, monomer.

Its subcellular location is the cytoplasm. It carries out the reaction an N-acyl-L-alpha-aminoacyl-tRNA + H2O = an N-acyl-L-amino acid + a tRNA + H(+). Its function is as follows. Hydrolyzes ribosome-free peptidyl-tRNAs (with 1 or more amino acids incorporated), which drop off the ribosome during protein synthesis, or as a result of ribosome stalling. Catalyzes the release of premature peptidyl moieties from peptidyl-tRNA molecules trapped in stalled 50S ribosomal subunits, and thus maintains levels of free tRNAs and 50S ribosomes. The sequence is that of Peptidyl-tRNA hydrolase from Thermoanaerobacter pseudethanolicus (strain ATCC 33223 / 39E) (Clostridium thermohydrosulfuricum).